We begin with the raw amino-acid sequence, 127 residues long: Single-stranded DNA-binding protein 2 (127 aa).

The SSB domain occupies 4 to 103 (INKVMLVGRC…ITINTIELLG (100 aa)). Positions 104 to 127 (SPRKEESTSTSAPNETQAVANANF) are disordered. The segment covering 111–127 (TSTSAPNETQAVANANF) has biased composition (polar residues).

In terms of assembly, homotetramer.

The polypeptide is Single-stranded DNA-binding protein 2 (ssb2) (Nostoc sp. (strain PCC 7120 / SAG 25.82 / UTEX 2576)).